A 540-amino-acid chain; its full sequence is MTLNSLPAWTALQSHFEQIRHARLRDWFAPENDHTPTRAERFTIPGGGIAADFSKNRINDDTLRLLVQLARDAGVEARRDAMFAGEIVNPTEGRAALHTALRATDPQAPFHAQISAERAKMATFARAVRSGTWTGYTGKRIRHVINIGIGGSDLGPKMVVHALHHVATPEITTHFVSNVDGADLARVLEQVDPEETLAIIVSKTFTTLETMTNARSLRDWFVARGCPEDALAKHFVGVSANPAEVVKFGIAADNVFEMWDWVGGRYSLWSAVGLSIMIAIGPEQFDELLAGANDMDRHFREAPLERNLPVLLGLIGIWYRNFFGSQSYLVAPYSEALHYLPSYLQQLEMESNGKSARLDGTFVDYPTSAVTWGEPGTNGQHAFFQMLHQGPTIVPIDFIAVLTPEHPLASHHPKLLANCFAQSEALMLGRTLDEARKVAGPGKEALAPHLTFPGNRPTTTLLVDALTPRTLGALIALYEHKVLVQATVWDINPFDQWGVELGKILGKVVEADLSAESIDPAKHDSSTTALIERARAALKR.

Glu350 functions as the Proton donor in the catalytic mechanism. Residues His381 and Lys503 contribute to the active site.

Belongs to the GPI family.

The protein resides in the cytoplasm. The enzyme catalyses alpha-D-glucose 6-phosphate = beta-D-fructose 6-phosphate. The protein operates within carbohydrate biosynthesis; gluconeogenesis. It functions in the pathway carbohydrate degradation; glycolysis; D-glyceraldehyde 3-phosphate and glycerone phosphate from D-glucose: step 2/4. Catalyzes the reversible isomerization of glucose-6-phosphate to fructose-6-phosphate. The sequence is that of Glucose-6-phosphate isomerase from Burkholderia lata (strain ATCC 17760 / DSM 23089 / LMG 22485 / NCIMB 9086 / R18194 / 383).